A 266-amino-acid polypeptide reads, in one-letter code: 3-methyl-2-oxobutanoate hydroxymethyltransferase 2 (266 aa).

Residues aspartate 45 and aspartate 84 each contribute to the Mg(2+) site. 3-methyl-2-oxobutanoate contacts are provided by residues 45–46, aspartate 84, and lysine 112; that span reads DS. A Mg(2+)-binding site is contributed by glutamate 114. Glutamate 181 (proton acceptor) is an active-site residue.

Belongs to the PanB family. As to quaternary structure, homodecamer; pentamer of dimers. Mg(2+) is required as a cofactor.

It is found in the cytoplasm. The catalysed reaction is 3-methyl-2-oxobutanoate + (6R)-5,10-methylene-5,6,7,8-tetrahydrofolate + H2O = 2-dehydropantoate + (6S)-5,6,7,8-tetrahydrofolate. It participates in cofactor biosynthesis; (R)-pantothenate biosynthesis; (R)-pantoate from 3-methyl-2-oxobutanoate: step 1/2. Functionally, catalyzes the reversible reaction in which hydroxymethyl group from 5,10-methylenetetrahydrofolate is transferred onto alpha-ketoisovalerate to form ketopantoate. The polypeptide is 3-methyl-2-oxobutanoate hydroxymethyltransferase 2 (Pseudomonas aeruginosa (strain UCBPP-PA14)).